The following is a 373-amino-acid chain: 8-amino-7-oxononanoate synthase (373 aa).

R16 contacts substrate. Residue 93 to 94 (GF) participates in pyridoxal 5'-phosphate binding. H118 contacts substrate. Residues S165, 190-193 (DEAH), and 222-225 (TFSK) contribute to the pyridoxal 5'-phosphate site. At K225 the chain carries N6-(pyridoxal phosphate)lysine. A substrate-binding site is contributed by T334.

Belongs to the class-II pyridoxal-phosphate-dependent aminotransferase family. BioF subfamily. In terms of assembly, homodimer. Requires pyridoxal 5'-phosphate as cofactor.

It catalyses the reaction 6-carboxyhexanoyl-[ACP] + L-alanine + H(+) = (8S)-8-amino-7-oxononanoate + holo-[ACP] + CO2. It participates in cofactor biosynthesis; biotin biosynthesis. Catalyzes the decarboxylative condensation of pimeloyl-[acyl-carrier protein] and L-alanine to produce 8-amino-7-oxononanoate (AON), [acyl-carrier protein], and carbon dioxide. The sequence is that of 8-amino-7-oxononanoate synthase from Helicobacter pylori (strain ATCC 700392 / 26695) (Campylobacter pylori).